Here is a 240-residue protein sequence, read N- to C-terminus: MORN repeat-containing protein 3 (240 aa).

An interaction with MDM2 region spans residues C6–G35. MORN repeat units lie at residues Y38 to A60, Y62 to T84, Y91 to Y113, Y114 to I136, Y137 to R159, Y160 to Q182, and F184 to E205. An interaction with SIRT1 region spans residues T76–K100. Residues A206 to D240 form an interaction with TP53 region.

In terms of assembly, interacts with MEIG1. Interacts with TP53, MDM2 and SIRT1; the interactions mediate post-transcriptional modifications of TP53 by MDM2 and SIRT1.

It localises to the cytoplasmic vesicle. It is found in the secretory vesicle. Its subcellular location is the acrosome. In terms of biological role, assembles a suppression complex (suppresome) by tethering SIRT1 and MDM2 to regulate composite modifications of p53/TP53. Confers both deacetylation-mediated functional inactivation, by SIRT1, and ubiquitination-dependent degradation, by MDM2, of p53/TP53, promoting a proliferative and cell survival behaviors. May play a role in the regulation of spermatogenesis. The polypeptide is MORN repeat-containing protein 3 (MORN3) (Macaca fascicularis (Crab-eating macaque)).